A 219-amino-acid polypeptide reads, in one-letter code: OVARIAN TUMOR DOMAIN-containing deubiquitinating enzyme 12 (219 aa).

The region spanning 79–203 is the OTU domain; the sequence is LCELKVSGDG…EVHYNSLYDI (125 aa). D87 is a catalytic residue. C90 (nucleophile) is an active-site residue. H196 is an active-site residue.

Belongs to the peptidase C85 family.

It catalyses the reaction Thiol-dependent hydrolysis of ester, thioester, amide, peptide and isopeptide bonds formed by the C-terminal Gly of ubiquitin (a 76-residue protein attached to proteins as an intracellular targeting signal).. Functionally, hydrolase that can remove conjugated ubiquitin from proteins in vitro and may therefore play an important regulatory role at the level of protein turnover by preventing degradation. Inactive cysteine protease. This is OVARIAN TUMOR DOMAIN-containing deubiquitinating enzyme 12 from Arabidopsis thaliana (Mouse-ear cress).